We begin with the raw amino-acid sequence, 453 residues long: Homogentisate 1,2-dioxygenase (453 aa).

His306 (proton acceptor) is an active-site residue. His349 and Glu355 together coordinate Fe cation. Tyr364 and His385 together coordinate homogentisate. His385 contributes to the Fe cation binding site.

Belongs to the homogentisate dioxygenase family. In terms of assembly, hexamer; dimer of trimers. Fe cation is required as a cofactor.

The catalysed reaction is homogentisate + O2 = 4-maleylacetoacetate + H(+). Its pathway is amino-acid degradation; L-phenylalanine degradation; acetoacetate and fumarate from L-phenylalanine: step 4/6. Functionally, involved in the catabolism of homogentisate (2,5-dihydroxyphenylacetate or 2,5-OH-PhAc), a central intermediate in the degradation of phenylalanine and tyrosine. Catalyzes the oxidative ring cleavage of the aromatic ring of homogentisate to yield maleylacetoacetate. This chain is Homogentisate 1,2-dioxygenase, found in Rhizobium rhizogenes (strain K84 / ATCC BAA-868) (Agrobacterium radiobacter).